A 389-amino-acid chain; its full sequence is Ethanolamine-phosphate cytidylyltransferase (389 aa).

Residues 1 to 20 form a disordered region; the sequence is MIRNGRGAAGGAEQPGPGGR. CTP contacts are provided by residues 221 to 222, 229 to 232, Lys259, 307 to 310, and 336 to 340; these read AF, HVDF, HGKT, and SGSNL. Ser338 carries the phosphoserine modification. Residues Thr341 and Thr342 each carry the phosphothreonine modification.

It belongs to the cytidylyltransferase family. As to expression, strongest expression in liver, heart, and skeletal muscle.

It catalyses the reaction phosphoethanolamine + CTP + H(+) = CDP-ethanolamine + diphosphate. The protein operates within phospholipid metabolism; phosphatidylethanolamine biosynthesis; phosphatidylethanolamine from ethanolamine: step 2/3. Ethanolamine-phosphate cytidylyltransferase that catalyzes the second step in the synthesis of phosphatidylethanolamine (PE) from ethanolamine via the CDP-ethanolamine pathway. Phosphatidylethanolamine is a dominant inner-leaflet phospholipid in cell membranes, where it plays a role in membrane function by structurally stabilizing membrane-anchored proteins, and participates in important cellular processes such as cell division, cell fusion, blood coagulation, and apoptosis. This is Ethanolamine-phosphate cytidylyltransferase (PCYT2) from Homo sapiens (Human).